We begin with the raw amino-acid sequence, 185 residues long: Elongation factor P (185 aa).

It belongs to the elongation factor P family.

It localises to the cytoplasm. Its pathway is protein biosynthesis; polypeptide chain elongation. Involved in peptide bond synthesis. Stimulates efficient translation and peptide-bond synthesis on native or reconstituted 70S ribosomes in vitro. Probably functions indirectly by altering the affinity of the ribosome for aminoacyl-tRNA, thus increasing their reactivity as acceptors for peptidyl transferase. This chain is Elongation factor P, found in Picosynechococcus sp. (strain ATCC 27264 / PCC 7002 / PR-6) (Agmenellum quadruplicatum).